The sequence spans 325 residues: 5-dehydro-2-deoxygluconokinase (325 aa).

The protein belongs to the carbohydrate kinase PfkB family.

It catalyses the reaction 5-dehydro-2-deoxy-D-gluconate + ATP = 6-phospho-5-dehydro-2-deoxy-D-gluconate + ADP + H(+). The protein operates within polyol metabolism; myo-inositol degradation into acetyl-CoA; acetyl-CoA from myo-inositol: step 5/7. Catalyzes the phosphorylation of 5-dehydro-2-deoxy-D-gluconate (2-deoxy-5-keto-D-gluconate or DKG) to 6-phospho-5-dehydro-2-deoxy-D-gluconate (DKGP). In Listeria monocytogenes serotype 4a (strain HCC23), this protein is 5-dehydro-2-deoxygluconokinase.